A 110-amino-acid polypeptide reads, in one-letter code: SOSS complex subunit C (110 aa).

This sequence belongs to the SOSS-C family. In terms of assembly, belongs to the multiprotein complex Integrator. Component of the SOSS complex, composed of soss-b (soss-b1/nabp2 or soss-b2/nabp1), soss-a/ints3 and soss-c/inip.

Its subcellular location is the nucleus. Functionally, component of the SOSS complex, a multiprotein complex that functions downstream of the MRN complex to promote DNA repair and G2/M checkpoint. The SOSS complex associates with single-stranded DNA at DNA lesions and influences diverse endpoints in the cellular DNA damage response including cell-cycle checkpoint activation, recombinational repair and maintenance of genomic stability. Required for efficient homologous recombination-dependent repair of double-strand breaks (DSBs). This Xenopus laevis (African clawed frog) protein is SOSS complex subunit C (inip).